Consider the following 662-residue polypeptide: Chaperone protein dnaK1 (662 aa).

Residue Thr-198 is modified to Phosphothreonine; by autocatalysis. The tract at residues 630–662 (DWDDDPWAAPSGPPRGRSLNRRDRDPWDDDFYR) is disordered. The segment covering 649 to 662 (NRRDRDPWDDDFYR) has biased composition (basic and acidic residues).

It belongs to the heat shock protein 70 family.

Acts as a chaperone. The sequence is that of Chaperone protein dnaK1 (dnaK1) from Parasynechococcus marenigrum (strain WH8102).